The following is a 589-amino-acid chain: ABC transporter G family member 8 (589 aa).

An ABC transporter domain is found at 16–261; sequence LTTSSISYTI…LLFKGFTVPP (246 aa). 62 to 69 is an ATP binding site; it reads GPSGAGKS. An ABC transmembrane type-2 domain is found at 311–521; the sequence is TEISLLARRF…ALDALLINEY (211 aa). 7 consecutive transmembrane segments (helical) span residues 335–355, 365–385, 412–432, 441–461, 470–490, 499–519, and 560–580; these read ALEA…IGIG, MFAF…PIFI, VFLP…YFLI, FGYF…FVLF, ITGT…SGYF, YWLF…LLIN, and FNVY…FLAL.

It belongs to the ABC transporter superfamily. ABCG family. Eye pigment precursor importer (TC 3.A.1.204) subfamily.

The protein localises to the membrane. This Arabidopsis thaliana (Mouse-ear cress) protein is ABC transporter G family member 8 (ABCG8).